Consider the following 303-residue polypeptide: Polyisoprenyl-teichoic acid--peptidoglycan teichoic acid transferase TagU (303 aa).

Residues 1 to 4 (MKKK) lie on the Cytoplasmic side of the membrane. The helical; Signal-anchor for type II membrane protein transmembrane segment at 5 to 25 (ILFWVLGILGVLIIGGGIYAY) threads the bilayer. Topologically, residues 26 to 303 (NVYSSVSNTL…KLRTHLEVTK (278 aa)) are extracellular.

The protein belongs to the LytR/CpsA/Psr (LCP) family.

The protein resides in the cell membrane. Its pathway is cell wall biogenesis. Functionally, may catalyze the final step in cell wall teichoic acid biosynthesis, the transfer of the anionic cell wall polymers (APs) from their lipid-linked precursor to the cell wall peptidoglycan (PG). The protein is Polyisoprenyl-teichoic acid--peptidoglycan teichoic acid transferase TagU of Bacillus anthracis (strain A0248).